Here is a 58-residue protein sequence, read N- to C-terminus: Large ribosomal subunit protein bL32 (58 aa).

It belongs to the bacterial ribosomal protein bL32 family.

This Prochlorococcus marinus (strain MIT 9303) protein is Large ribosomal subunit protein bL32.